The primary structure comprises 609 residues: Phosphomethylpyrimidine synthase (609 aa).

Residues Asn219, Met248, Tyr277, His313, 333 to 335, 374 to 377, and Glu413 each bind substrate; these read SRG and DGLR. His417 lines the Zn(2+) pocket. Tyr440 is a substrate binding site. Position 481 (His481) interacts with Zn(2+). Residues Cys561, Cys564, and Cys569 each coordinate [4Fe-4S] cluster.

Belongs to the ThiC family. The cofactor is [4Fe-4S] cluster.

The enzyme catalyses 5-amino-1-(5-phospho-beta-D-ribosyl)imidazole + S-adenosyl-L-methionine = 4-amino-2-methyl-5-(phosphooxymethyl)pyrimidine + CO + 5'-deoxyadenosine + formate + L-methionine + 3 H(+). Its pathway is cofactor biosynthesis; thiamine diphosphate biosynthesis. Catalyzes the synthesis of the hydroxymethylpyrimidine phosphate (HMP-P) moiety of thiamine from aminoimidazole ribotide (AIR) in a radical S-adenosyl-L-methionine (SAM)-dependent reaction. The protein is Phosphomethylpyrimidine synthase of Deinococcus geothermalis (strain DSM 11300 / CIP 105573 / AG-3a).